We begin with the raw amino-acid sequence, 268 residues long: tRNA pseudouridine synthase A (268 aa).

D52 (nucleophile) is an active-site residue. Y110 contributes to the substrate binding site.

It belongs to the tRNA pseudouridine synthase TruA family. As to quaternary structure, homodimer.

It carries out the reaction uridine(38/39/40) in tRNA = pseudouridine(38/39/40) in tRNA. Functionally, formation of pseudouridine at positions 38, 39 and 40 in the anticodon stem and loop of transfer RNAs. This Prochlorococcus marinus (strain MIT 9301) protein is tRNA pseudouridine synthase A.